A 161-amino-acid chain; its full sequence is Small ribosomal subunit protein uS9 (161 aa).

Disordered regions lie at residues Met1–Pro28 and Lys142–Arg161.

It belongs to the universal ribosomal protein uS9 family.

The protein is Small ribosomal subunit protein uS9 of Clavibacter sepedonicus (Clavibacter michiganensis subsp. sepedonicus).